Here is a 396-residue protein sequence, read N- to C-terminus: Elongation factor Tu (396 aa).

The tr-type G domain maps to 10–206 (KPHCNIGTIG…AVDEFIPQPT (197 aa)). Residues 19 to 26 (GHVDHGKT) are G1. 19–26 (GHVDHGKT) serves as a coordination point for GTP. Thr26 lines the Mg(2+) pocket. Positions 60-64 (GITIS) are G2. The interval 81-84 (DCPG) is G3. Residues 81 to 85 (DCPGH) and 136 to 139 (NKVD) contribute to the GTP site. The segment at 136 to 139 (NKVD) is G4. Residues 174 to 176 (SAL) form a G5 region.

Belongs to the TRAFAC class translation factor GTPase superfamily. Classic translation factor GTPase family. EF-Tu/EF-1A subfamily. Monomer.

It localises to the cytoplasm. The catalysed reaction is GTP + H2O = GDP + phosphate + H(+). In terms of biological role, GTP hydrolase that promotes the GTP-dependent binding of aminoacyl-tRNA to the A-site of ribosomes during protein biosynthesis. The protein is Elongation factor Tu of Pelagibacter ubique (strain HTCC1062).